A 152-amino-acid polypeptide reads, in one-letter code: Ribosome maturation factor RimP (152 aa).

Belongs to the RimP family.

Its subcellular location is the cytoplasm. Its function is as follows. Required for maturation of 30S ribosomal subunits. This is Ribosome maturation factor RimP from Clostridium beijerinckii (strain ATCC 51743 / NCIMB 8052) (Clostridium acetobutylicum).